The primary structure comprises 491 residues: Cytosolic Fe-S cluster assembly factor NAR1 (491 aa).

Residues C20, C59, C62, C65, C177, C231, C412, and C416 each coordinate [4Fe-4S] cluster.

It belongs to the NARF family. Interacts with CIA1.

The protein resides in the cytoplasm. It localises to the nucleus. Functionally, essential component of a cytosolic Fe/S protein assembly machinery. Required for maturation of extramitochondrial Fe/S proteins. May play a role in the transfer of pre-assembled Fe/S clusters to target apoproteins. The sequence is that of Cytosolic Fe-S cluster assembly factor NAR1 (NAR1) from Saccharomyces cerevisiae (strain ATCC 204508 / S288c) (Baker's yeast).